Reading from the N-terminus, the 35-residue chain is MFGQYEVFVQLALLALIVLAGPAVILLLYLRGADM.

Residues 7-27 (VFVQLALLALIVLAGPAVILL) traverse the membrane as a helical segment.

Belongs to the Psb30/Ycf12 family. PSII is composed of 1 copy each of membrane proteins PsbA, PsbB, PsbC, PsbD, PsbE, PsbF, PsbH, PsbI, PsbJ, PsbK, PsbL, PsbM, PsbT, PsbX, PsbY, PsbZ, Psb30/Ycf12, peripheral proteins PsbO, CyanoQ (PsbQ), PsbU, PsbV and a large number of cofactors. It forms dimeric complexes.

The protein resides in the cellular thylakoid membrane. Functionally, a core subunit of photosystem II (PSII), probably helps stabilize the reaction center. In Synechococcus sp. (strain JA-2-3B'a(2-13)) (Cyanobacteria bacterium Yellowstone B-Prime), this protein is Photosystem II reaction center protein Psb30.